Reading from the N-terminus, the 695-residue chain is Pre-mRNA-splicing factor CLF1 (695 aa).

12 HAT repeats span residues D41–E73, H75–K107, G109–S141, A143–R174, E176–R207, T296–N328, L333–K365, N375–R412, D414–K445, R447–S479, Q521–T553, and N591–Q629.

It belongs to the crooked-neck family. In terms of assembly, associated with the spliceosome.

Its subcellular location is the nucleus. In terms of biological role, involved in pre-mRNA splicing and cell cycle progression. Required for the spliceosome assembly and initiation of the DNA replication. The polypeptide is Pre-mRNA-splicing factor CLF1 (CLF1) (Candida glabrata (strain ATCC 2001 / BCRC 20586 / JCM 3761 / NBRC 0622 / NRRL Y-65 / CBS 138) (Yeast)).